A 465-amino-acid polypeptide reads, in one-letter code: Amino-acid carrier protein AlsT (465 aa).

10 helical membrane-spanning segments follow: residues 20-40 (LFYILIGLGLFFTIRFGFIQF), 82-102 (VALAIATGGPGAVFWMWVVAA), 142-162 (WLGIVFAILITVSFGLIFNAV), 177-197 (VNKIVVAIVLAVLTAFIIFGG), 208-228 (IVPVMAGIYILIALFVVITNI), 241-261 (NALGFEQVVGGGIGGIIVIGA), 296-316 (LGVFFDTFIICTSTAFIILLY), 336-356 (IGGWAPTFIAVAMFLFAFSSV), 382-402 (IAVIAMVVYGSLSGFQIVWDM), and 405-425 (LFMGIMALINLIVIALLSNVA).

Belongs to the alanine or glycine:cation symporter (AGCS) (TC 2.A.25) family.

The protein localises to the cell membrane. The chain is Amino-acid carrier protein AlsT (alsT) from Bacillus subtilis (strain 168).